The primary structure comprises 376 residues: MARVEL domain-containing protein 3 (376 aa).

Residues 1–95 are compositionally biased toward basic and acidic residues; it reads MKNTSGHREP…EKSRQSRARP (95 aa). Residues 1-134 form a disordered region; it reads MKNTSGHREP…GRRGLESERA (134 aa). The Cytoplasmic portion of the chain corresponds to 1–173; that stretch reads MKNTSGHREP…HKCRYLCTGR (173 aa). Positions 168–361 constitute an MARVEL domain; that stretch reads YLCTGRACWQ…GAVLAFRGYR (194 aa). The helical transmembrane segment at 174–194 threads the bilayer; the sequence is ACWQMLKALLNLLILACSSVS. Residues 195–247 are Extracellular-facing; that stretch reads YNSTGGYTGITSLGGIYYYQYGGAYSGFDGADGERAQQLDVQFYQLKLPTVTA. The chain crosses the membrane as a helical span at residues 248–268; it reads AMAYSGALMTFSCLTLLAGAL. Over 269 to 275 the chain is Cytoplasmic; sequence RVPWHCP. A helical membrane pass occupies residues 276 to 296; it reads LWLVIEGLMDALIAGAYVPGL. The Extracellular segment spans residues 297–335; sequence YFFFQHLSAAYSSDVCKERETLYQSKGYSGFNCGVHGGD. A helical membrane pass occupies residues 336–356; that stretch reads IGAGVFAAMAIGVFAVGAVLA. Residues 357–376 lie on the Cytoplasmic side of the membrane; that stretch reads FRGYRKVKKLKEKPTEMLEF.

As to expression, widely expressed with highest levels in small intestine, colon, stomach and lung. Liver expresses only isoform 2.

Its subcellular location is the membrane. It is found in the cell junction. It localises to the tight junction. Its function is as follows. As a component of tight junctions, plays a role in paracellular ion conductivity. In Mus musculus (Mouse), this protein is MARVEL domain-containing protein 3 (Marveld3).